Reading from the N-terminus, the 222-residue chain is 2-amino-5-formylamino-6-ribosylaminopyrimidin-4(3H)-one 5'-monophosphate deformylase (222 aa).

The Fe cation site is built by Glu29, His31, Asp40, and His108.

It belongs to the creatininase superfamily. FAPy deformylase family. As to quaternary structure, homodimer. Requires Fe(2+) as cofactor. Zn(2+) serves as cofactor.

The catalysed reaction is 2-amino-5-formylamino-6-(5-phospho-D-ribosylamino)pyrimidin-4(3H)-one + H2O = 2,5-diamino-6-(1-D-ribosylamino)pyrimidin-4(3H)-one 5'-phosphate + formate + H(+). It participates in cofactor biosynthesis; coenzyme F420 biosynthesis. It functions in the pathway cofactor biosynthesis; riboflavin biosynthesis. Catalyzes the hydrolysis of the formamide of 2-amino-5-formylamino-6-ribosylamino-4(3H)-pyrimidinone 5'-monophosphate (FAPy) to form 2,5-diamino-6-ribosylamino-4(3H)-pyrimidinone 5'-phosphate (APy). This is 2-amino-5-formylamino-6-ribosylaminopyrimidin-4(3H)-one 5'-monophosphate deformylase from Methanocaldococcus infernus (strain DSM 11812 / JCM 15783 / ME).